A 305-amino-acid polypeptide reads, in one-letter code: Probable 5-dehydro-4-deoxyglucarate dehydratase (305 aa).

This sequence belongs to the DapA family.

The enzyme catalyses 5-dehydro-4-deoxy-D-glucarate + H(+) = 2,5-dioxopentanoate + CO2 + H2O. It functions in the pathway carbohydrate acid metabolism; D-glucarate degradation; 2,5-dioxopentanoate from D-glucarate: step 2/2. The polypeptide is Probable 5-dehydro-4-deoxyglucarate dehydratase (Xanthomonas campestris pv. campestris (strain 8004)).